The chain runs to 189 residues: Elongation factor P (189 aa).

Lys34 is modified (N6-(3,6-diaminohexanoyl)-5-hydroxylysine).

Belongs to the elongation factor P family. Post-translationally, may be beta-lysylated on the epsilon-amino group of Lys-34 by the combined action of EpmA and EpmB, and then hydroxylated on the C5 position of the same residue by EpmC (if this protein is present). Lysylation is critical for the stimulatory effect of EF-P on peptide-bond formation. The lysylation moiety may extend toward the peptidyltransferase center and stabilize the terminal 3-CCA end of the tRNA. Hydroxylation of the C5 position on Lys-34 may allow additional potential stabilizing hydrogen-bond interactions with the P-tRNA.

Its subcellular location is the cytoplasm. It functions in the pathway protein biosynthesis; polypeptide chain elongation. Involved in peptide bond synthesis. Alleviates ribosome stalling that occurs when 3 or more consecutive Pro residues or the sequence PPG is present in a protein, possibly by augmenting the peptidyl transferase activity of the ribosome. Modification of Lys-34 is required for alleviation. This chain is Elongation factor P, found in Buchnera aphidicola subsp. Acyrthosiphon pisum (strain APS) (Acyrthosiphon pisum symbiotic bacterium).